The sequence spans 188 residues: Marginal zone B- and B1-cell-specific protein (188 aa).

Positions 1–20 (MRLPLPLLLLFGCRAILGSA) are cleaved as a signal peptide. 3 cysteine pairs are disulfide-bonded: Cys49/Cys177, Cys52/Cys170, and Cys94/Cys142. Positions 185-188 (REEL) match the Prevents secretion from ER motif.

Belongs to the MZB1 family. As to quaternary structure, part of the ER chaperone complex, a multi-protein complex in the endoplasmic reticulum containing a large number of molecular chaperones which associates with unassembled incompletely folded immunoglobulin heavy chains. Interacts with HSP90B1 and PDIA3 in a calcium-dependent manner. Post-translationally, forms an interchain disulfide bond with IgM monomers. In terms of tissue distribution, expressed predominantly in the spleen and lymph nodes. Abundantly expressed in marginal zone B and B1 cells. High expression in mesenteric adipose tissue (MAT). Expressed also in pancreas, perigonadal adipose tissue (PAT), uterus, subcutaneous adipose tissue, heart, muscle, ovary and liver. Very low expression is detected in brown adipose tissue. In PAT, significantly higher expression in stromal-vascular cell than in adipocytes. Expressed in macrophage RAW 264.7 cell line. Down-regulated in For-knockout female MAT at 5 months (obese state) followed by steep up-regulation at 9 months (prediabetic condition) when mutants progress towards the metabolic syndrome.

It is found in the endoplasmic reticulum. It localises to the endoplasmic reticulum lumen. The protein localises to the secreted. Functionally, associates with immunoglobulin M (IgM) heavy and light chains and promotes IgM assembly and secretion. May exert its effect by acting as a molecular chaperone or as an oxidoreductase as it displays a low level of oxidoreductase activity. Helps to diversify peripheral B-cell functions by regulating Ca(2+) stores, antibody secretion and integrin activation. In terms of biological role, acts as a hormone-regulated adipokine/pro-inflammatory cytokine that is implicated in causing chronic inflammation, affecting cellular expansion and blunting insulin response in adipocytes. May have a role in the onset of insulin resistance. In Mus musculus (Mouse), this protein is Marginal zone B- and B1-cell-specific protein (Mzb1).